The sequence spans 1860 residues: Golgi-specific brefeldin A-resistance guanine nucleotide exchange factor 1 (1860 aa).

A DCB; DCB:DCB domain and DCB:HUS domain interaction region spans residues 1-211 (MVDKNIYIIQ…EPKNYVGTNM (211 aa)). An interaction with RAB1B region spans residues 1 to 381 (MVDKNIYIIQ…SVHDMDYVNP (381 aa)). 2 disordered regions span residues 215-266 (KMRA…GGMP) and 281-372 (AASA…DSAS). Residues 227-241 (WKKQKRSPRPPRHMT) show a composition bias toward basic residues. 3 stretches are compositionally biased toward polar residues: residues 250-262 (PTPN…SNLT), 290-301 (TDSGLEFSSQTT), and 335-351 (DLQQ…SASV). 2 positions are modified to phosphoserine: S350 and S353. T508 is subject to Phosphothreonine. An HUS; DCB:HUS domain interaction region spans residues 531 to 551 (RIPSFVTELYINYDCDYYCSN). Residues 620 to 631 (TREASNTERTAS) show a composition bias toward basic and acidic residues. Residues 620-666 (TREASNTERTASDGKAVGMASDIPGLHLPGGGRLPPEHGKSGCSDLE) are disordered. Phosphoserine is present on S663. An SEC7 domain is found at 693–883 (ELIEIKNKKK…EDMYHAIKNE (191 aa)). The phosphatidylinositol-phosphate binding; required for translocation to the leading edge and for ARF1 activation upon GPCR signaling stretch occupies residues 887 to 1371 (MPEEQTGLVR…PSRPGPSPLI (485 aa)). Residues 1285–1297 (QATARADAPDAGA) are compositionally biased toward low complexity. The tract at residues 1285–1336 (QATARADAPDAGAQSDSELPSYHQNDVSLDRGYTSDSEVYTDHGRPGKIHRS) is disordered. Polar residues predominate over residues 1298–1311 (QSDSELPSYHQNDV). The residue at position 1299 (S1299) is a Phosphoserine. A Phosphotyrosine modification is found at Y1317. Phosphoserine is present on residues S1319, S1321, and S1336. A Phosphothreonine; by AMPK modification is found at T1338. Disordered stretches follow at residues 1351–1371 (GKDD…SPLI), 1431–1484 (CKSQ…DEGV), and 1726–1809 (PMPM…QPPL). The segment covering 1433–1447 (SQEKRGKSHKYDSKG) has biased composition (basic and acidic residues). Over residues 1465–1474 (TSSQHASRGG) the composition is skewed to polar residues. S1476, S1774, and S1785 each carry phosphoserine. Over residues 1775 to 1792 (PRAASSSSPGSPVASSPS) the composition is skewed to low complexity.

As to quaternary structure, can form homodimers and probably homotetramers. Interacts with COPG1; the interaction is independent of ARF1 activation. Interacts with ARF1, ARF3, ARF4 and ARF5. Interacts with RAB1B (GTP-bound form); required for GBF1 membrane association. Interacts with GGA1, GGA2 and GGA3. Interacts with USO1. Interacts (via SEC7 domain) with PNPLA2 (via C-terminus); the interaction is direct. Interacts with ARMH3. (Microbial infection) Interacts with poliovirus protein 3A. Post-translationally, AMPK-mediated phosphorylation at Thr-1338 is induced by 2-deoxyglucose (2-DG) and AICA ribonucleotide, and occurs during mitosis leading to membrane disassociation and inactivation of ARF1 during mitosis. Ubiquitous.

The protein localises to the golgi apparatus. The protein resides in the cis-Golgi network. It is found in the endoplasmic reticulum-Golgi intermediate compartment. It localises to the trans-Golgi network. Its subcellular location is the cytoplasm. The protein localises to the lipid droplet. The protein resides in the membrane. Inhibited by brefeldin A (BFA). Inhibited by golgicide A (GCA). In terms of biological role, guanine-nucleotide exchange factor (GEF) for members of the Arf family of small GTPases involved in trafficking in the early secretory pathway; its GEF activity initiates the coating of nascent vesicles via the localized generation of activated ARFs through replacement of GDP with GTP. Recruitment to cis-Golgi membranes requires membrane association of Arf-GDP and can be regulated by ARF1, ARF3, ARF4 and ARF5. Involved in the recruitment of the COPI coat complex to the endoplasmic reticulum exit sites (ERES), and the endoplasmic reticulum-Golgi intermediate (ERGIC) and cis-Golgi compartments which implicates ARF1 activation. Involved in COPI vesicle-dependent retrograde transport from the ERGIC and cis-Golgi compartments to the endoplasmic reticulum (ER). Involved in the trans-Golgi network recruitment of GGA1, GGA2, GGA3, BIG1, BIG2, and the AP-1 adaptor protein complex related to chlathrin-dependent transport; the function requires its GEF activity (probably at least in part on ARF4 and ARF5). Has GEF activity towards ARF1. Has in vitro GEF activity towards ARF5. Involved in the processing of PSAP. Required for the assembly of the Golgi apparatus. The AMPK-phosphorylated form is involved in Golgi disassembly during mitotis and under stress conditions. May be involved in the COPI vesicle-dependent recruitment of PNPLA2 to lipid droplets; however, this function is under debate. In neutrophils, involved in G protein-coupled receptor (GPCR)-mediated chemotaxis und superoxide production. Proposed to be recruited by phosphatidylinositol-phosphates generated upon GPCR stimulation to the leading edge where it recruits and activates ARF1, and is involved in recruitment of GIT2 and the NADPH oxidase complex. Plays a role in maintaining mitochondrial morphology. The chain is Golgi-specific brefeldin A-resistance guanine nucleotide exchange factor 1 (GBF1) from Homo sapiens (Human).